Reading from the N-terminus, the 307-residue chain is Methionyl-tRNA formyltransferase (307 aa).

108-111 (SLLP) serves as a coordination point for (6S)-5,6,7,8-tetrahydrofolate.

It belongs to the Fmt family.

The catalysed reaction is L-methionyl-tRNA(fMet) + (6R)-10-formyltetrahydrofolate = N-formyl-L-methionyl-tRNA(fMet) + (6S)-5,6,7,8-tetrahydrofolate + H(+). Attaches a formyl group to the free amino group of methionyl-tRNA(fMet). The formyl group appears to play a dual role in the initiator identity of N-formylmethionyl-tRNA by promoting its recognition by IF2 and preventing the misappropriation of this tRNA by the elongation apparatus. The polypeptide is Methionyl-tRNA formyltransferase (Xylella fastidiosa (strain M12)).